We begin with the raw amino-acid sequence, 468 residues long: Cyclin-dependent kinase 14 (468 aa).

Residues Ser-24, Ser-77, and Ser-94 each carry the phosphoserine modification. Residues 103-132 (KTSSAGKESPKVRRHSSPSSPTSPKFGKAD) are disordered. Residue Ser-133 is modified to Phosphoserine. Residues 134–418 (YEKLEKLGEG…AQAALSHEYF (285 aa)) enclose the Protein kinase domain. ATP is bound by residues 140 to 148 (LGEGSYATV) and Lys-163. Catalysis depends on Asp-255, which acts as the Proton acceptor. The disordered stretch occupies residues 448–468 (ESMRAFGKNNSYGKSLSNSKH). Over residues 455-468 (KNNSYGKSLSNSKH) the composition is skewed to polar residues.

It belongs to the protein kinase superfamily. CMGC Ser/Thr protein kinase family. CDC2/CDKX subfamily. As to quaternary structure, found in a complex with LRP6, CCNY and CAPRIN2 during G2/M stage; CAPRIN2 functions as a scaffold for the complex by binding to CCNY via its N terminus and to CDK14 via its C terminus. Interacts with CCNY; CCNY mediates its recruitment to the plasma membrane and promotes phosphorylation of LRP6. Interacts with CCDN3 and CDKN1A. Interacts with SEPT8. Interacts with 14-3-3 proteina YWHAB, YWHAE, YWHAH and YWHAQ.

It is found in the cell membrane. The protein localises to the cytoplasm. Its subcellular location is the nucleus. It carries out the reaction L-seryl-[protein] + ATP = O-phospho-L-seryl-[protein] + ADP + H(+). It catalyses the reaction L-threonyl-[protein] + ATP = O-phospho-L-threonyl-[protein] + ADP + H(+). With respect to regulation, serine/threonine-protein kinase activity is promoted by associated cyclins CCDN3 and CCNY and repressed by CDKN1A. In terms of biological role, serine/threonine-protein kinase involved in the control of the eukaryotic cell cycle, whose activity is controlled by an associated cyclin. Acts as a cell-cycle regulator of Wnt signaling pathway during G2/M phase by mediating the phosphorylation of LRP6 at 'Ser-1490', leading to the activation of the Wnt signaling pathway. Acts as a regulator of cell cycle progression and cell proliferation via its interaction with CCDN3. Phosphorylates RB1 in vitro, however the relevance of such result remains to be confirmed in vivo. May also play a role in meiosis, neuron differentiation and may indirectly act as a negative regulator of insulin-responsive glucose transport. The polypeptide is Cyclin-dependent kinase 14 (CDK14) (Dasypus novemcinctus (Nine-banded armadillo)).